The sequence spans 349 residues: Farnesyl pyrophosphate synthase vrtD (349 aa).

K53, R56, and Q92 together coordinate isopentenyl diphosphate. Residues D99 and D103 each contribute to the Mg(2+) site. Residue R108 participates in dimethylallyl diphosphate binding. Isopentenyl diphosphate is bound at residue R109. Residues K196, T197, Q236, K253, and K262 each contribute to the dimethylallyl diphosphate site.

Belongs to the FPP/GGPP synthase family. The cofactor is Mg(2+).

It catalyses the reaction isopentenyl diphosphate + dimethylallyl diphosphate = (2E)-geranyl diphosphate + diphosphate. The catalysed reaction is isopentenyl diphosphate + (2E)-geranyl diphosphate = (2E,6E)-farnesyl diphosphate + diphosphate. It participates in secondary metabolite biosynthesis; terpenoid biosynthesis. Functionally, farnesyl pyrophosphate synthase; part of the gene cluster that mediates the biosynthesis of viridicatumtoxin, a tetracycline-like fungal meroterpenoid with a unique, fused spirobicyclic ring system. The first step of the pathway is the production of the malonamoyl-CoA starter unit for the polyketide synthase vrtA. The aldolase vrtJ may be involved in the synthesis of the malonamate substrate for malonamoyl-CoA synthetase vrtB. The polyketide synthase vrtA then may utilize the malonamoyl-CoA starter unit, followed by sequential condensation of eight malonyl-CoA units to form the polyketide backbone. The cyclization of the last ring could be mediated by the lactamase-like protein vrtG. The proposed post-PKS tailoring steps are a hydroxylation at C5 catalyzed the cytochrome P450 monooxygenase vrtE, a hydroxylation at C12a catalyzed by VrtH and/or VrtI, and an O-methylation by the O-methyltransferase vrtF. VrtC is then proposed to catalyze the transfer of a geranyl group synthesized by vrtD to the aromatic C ring of the tetracyclic polyketide intermediate of viridicatumtoxin to yield previridicatumtoxin. Finally, the cytochrome P450 monooxygenase vrtK catalyzes the spirocyclization of the geranyl moiety of previridicatumtoxin to afford viridicatumtoxin. This is Farnesyl pyrophosphate synthase vrtD from Penicillium aethiopicum.